Consider the following 168-residue polypeptide: Secreted RxLR effector protein RXLR-C06 (168 aa).

The first 22 residues, 1-22 (MRIQLLWLSFAVLSTILSTCDA), serve as a signal peptide directing secretion. The interval 25 to 52 (DKLDPQRVQPNQNGSGHNQSIRSALKTS) is disordered. A compositionally biased stretch (polar residues) spans 32 to 50 (VQPNQNGSGHNQSIRSALK). Asn-37 and Asn-42 each carry an N-linked (GlcNAc...) asparagine glycan. The short motif at 46–63 (RSALKTSHGKTIADDEER) is the RxLR-dEER element. One can recognise an IQ domain in the interval 78-107 (YKAIVAKLSKYFRDYHERREIRKQRILNKS). An N-linked (GlcNAc...) asparagine glycan is attached at Asn-105.

Belongs to the RxLR effector family.

It localises to the secreted. The protein resides in the host Golgi apparatus. Its function is as follows. Secreted effector that suppresses pattern-triggered immunity (PTI) in plant host. In Plasmopara halstedii (Downy mildew of sunflower), this protein is Secreted RxLR effector protein RXLR-C06.